We begin with the raw amino-acid sequence, 179 residues long: UPF0302 protein BLi02393/BL02764 (179 aa).

Belongs to the UPF0302 family.

In Bacillus licheniformis (strain ATCC 14580 / DSM 13 / JCM 2505 / CCUG 7422 / NBRC 12200 / NCIMB 9375 / NCTC 10341 / NRRL NRS-1264 / Gibson 46), this protein is UPF0302 protein BLi02393/BL02764.